The primary structure comprises 250 residues: HTH-type transcriptional regulator KipR (250 aa).

One can recognise an HTH iclR-type domain in the interval 5 to 65; that stretch reads NKTVVKSMAL…DASGAYSLGL (61 aa). A DNA-binding region (H-T-H motif) is located at residues 26–45; it reads LSELVSLTGMPKTSVHRMVS. The 170-residue stretch at 80–249 folds into the IclR-ED domain; the sequence is IRKIAKPVME…ALQISRKIGY (170 aa).

Transcriptional repressor of the kip gene-containing operon. The chain is HTH-type transcriptional regulator KipR (kipR) from Bacillus subtilis (strain 168).